Here is an 83-residue protein sequence, read N- to C-terminus: RNA-binding protein Hfq (83 aa).

The region spanning 11 to 71 is the Sm domain; the sequence is DTFLNHVRKN…ISTIMPGHPV (61 aa).

The protein belongs to the Hfq family. Homohexamer.

RNA chaperone that binds small regulatory RNA (sRNAs) and mRNAs to facilitate mRNA translational regulation in response to envelope stress, environmental stress and changes in metabolite concentrations. Also binds with high specificity to tRNAs. The sequence is that of RNA-binding protein Hfq from Methylobacterium radiotolerans (strain ATCC 27329 / DSM 1819 / JCM 2831 / NBRC 15690 / NCIMB 10815 / 0-1).